The sequence spans 731 residues: Actin filament-associated protein 1 (731 aa).

Met1 is modified (N-acetylmethionine). Residues 46–90 (VKDHAQKAETNNLPAPPQMPLPEIPQPWLPPDSGPPPLPTSSLPE) are disordered. Residues 59 to 84 (PAPPQMPLPEIPQPWLPPDSGPPPLP) are compositionally biased toward pro residues. Positions 70–73 (PQPW) match the SH3-binding motif. Positions 93 to 96 (YEEA) match the SH2-binding 1 motif. The interval 118–138 (GSSYESYDEEEEDGKGKKTQH) is disordered. A PH 1 domain is found at 152–248 (DAKICAFLLR…WLKVIKEAYS (97 aa)). The tract at residues 252–318 (GPVDPECSPP…SKSEAKGTVS (67 aa)) is disordered. Residues 271 to 284 (AELEKKLSSERPSS) are compositionally biased toward basic and acidic residues. Phosphoserine occurs at positions 283 and 284. Residues 348-442 (DVPTCGYLNV…WIGILLAETG (95 aa)) enclose the PH 2 domain. Residues 452–457 (YDYIDV) carry the SH2-binding 2 motif. Positions 511–550 (SLKNKKPPASSNGLPVKGRAPSSQQKKVESAGGVKRTASN) are disordered. Ser549 is modified (phosphoserine). Residues 558 to 649 (KNRVEADAKR…VKESLKKALA (92 aa)) are a coiled coil. An interaction with F-actin region spans residues 595 to 638 (DLRAAIEVNAGRKTQVALEDKLKRLEEECKQREAERVSLELELT). The segment at 657-731 (AIEPKSGTSS…AREWELKNGT (75 aa)) is disordered. 3 positions are modified to phosphoserine: Ser665, Ser666, and Ser669. A Phosphothreonine modification is found at Thr676. A compositionally biased stretch (polar residues) spans 678-687 (ENSPISSCDT). A phosphoserine mark is found at Ser680 and Ser688. Positions 721 to 731 (KAREWELKNGT) are enriched in basic and acidic residues.

As to quaternary structure, monomer and homomultimer. Interacts via its C-terminus with F-actin; probably involving AFAP1 multimers. Interacts with activated SRC SH3-SH2 domains. Interacts via its PH 1 domain with PRKCA, PRKCB and PRKCI. Post-translationally, phosphorylated on tyrosine residues. Widely expressed with highest levels in brain.

The protein localises to the cytoplasm. It is found in the cytoskeleton. It localises to the stress fiber. In terms of biological role, can cross-link actin filaments into both network and bundle structures. May modulate changes in actin filament integrity and induce lamellipodia formation. May function as an adapter molecule that links other proteins, such as SRC and PKC to the actin cytoskeleton. This is Actin filament-associated protein 1 (Afap1) from Rattus norvegicus (Rat).